Reading from the N-terminus, the 318-residue chain is Protoheme IX farnesyltransferase (318 aa).

The next 9 membrane-spanning stretches (helical) occupy residues 31–51, 55–75, 98–118, 125–145, 153–173, 181–201, 206–228, 238–260, and 285–305; these read IILLLLITTAAGMGLAAQGPL, LAIATLIGGGLAAAAANTLNC, IQPFEAWAFALSLAALSFILL, LAAGLALAGIVFYVVIYTHGL, IVIGGAAGAIPPLVGWAAVTG, ILFAIVCLWTPPHFWALALMI, AAVKVPMLPVVVGNAATAQQILA, LALAWPLGAAGPFYSATALLLGL, and FSIFYLMLLCGAIAMDCLPGA.

The protein belongs to the UbiA prenyltransferase family. Protoheme IX farnesyltransferase subfamily.

The protein resides in the cell inner membrane. It carries out the reaction heme b + (2E,6E)-farnesyl diphosphate + H2O = Fe(II)-heme o + diphosphate. It participates in porphyrin-containing compound metabolism; heme O biosynthesis; heme O from protoheme: step 1/1. Converts heme B (protoheme IX) to heme O by substitution of the vinyl group on carbon 2 of heme B porphyrin ring with a hydroxyethyl farnesyl side group. This Synechococcus elongatus (strain ATCC 33912 / PCC 7942 / FACHB-805) (Anacystis nidulans R2) protein is Protoheme IX farnesyltransferase.